Here is a 379-residue protein sequence, read N- to C-terminus: Queuine tRNA-ribosyltransferase (379 aa).

Asp-94 (proton acceptor) is an active-site residue. Residues 94 to 98 (DSGGF), Asp-148, Gln-191, and Gly-218 contribute to the substrate site. Residues 249–255 (GVGSPDS) are RNA binding. The active-site Nucleophile is Asp-268. The tract at residues 273 to 277 (TRIAR) is RNA binding; important for wobble base 34 recognition. Positions 306, 308, 311, and 337 each coordinate Zn(2+).

Belongs to the queuine tRNA-ribosyltransferase family. As to quaternary structure, homodimer. Within each dimer, one monomer is responsible for RNA recognition and catalysis, while the other monomer binds to the replacement base PreQ1. Zn(2+) is required as a cofactor.

It catalyses the reaction 7-aminomethyl-7-carbaguanine + guanosine(34) in tRNA = 7-aminomethyl-7-carbaguanosine(34) in tRNA + guanine. It functions in the pathway tRNA modification; tRNA-queuosine biosynthesis. Its function is as follows. Catalyzes the base-exchange of a guanine (G) residue with the queuine precursor 7-aminomethyl-7-deazaguanine (PreQ1) at position 34 (anticodon wobble position) in tRNAs with GU(N) anticodons (tRNA-Asp, -Asn, -His and -Tyr). Catalysis occurs through a double-displacement mechanism. The nucleophile active site attacks the C1' of nucleotide 34 to detach the guanine base from the RNA, forming a covalent enzyme-RNA intermediate. The proton acceptor active site deprotonates the incoming PreQ1, allowing a nucleophilic attack on the C1' of the ribose to form the product. After dissociation, two additional enzymatic reactions on the tRNA convert PreQ1 to queuine (Q), resulting in the hypermodified nucleoside queuosine (7-(((4,5-cis-dihydroxy-2-cyclopenten-1-yl)amino)methyl)-7-deazaguanosine). In Listeria innocua serovar 6a (strain ATCC BAA-680 / CLIP 11262), this protein is Queuine tRNA-ribosyltransferase.